The primary structure comprises 186 residues: ADP-ribosylation factor-like protein DDB_G0292332 (186 aa).

GTP is bound by residues 24–31 (GVENVGKT), 78–82 (DIGGK), and 138–141 (NKQD).

It belongs to the small GTPase superfamily. Arf family.

In terms of biological role, binds and exchanges GTP and GDP. This is ADP-ribosylation factor-like protein DDB_G0292332 from Dictyostelium discoideum (Social amoeba).